A 98-amino-acid chain; its full sequence is NADH-ubiquinone oxidoreductase chain 4L (98 aa).

The next 3 membrane-spanning stretches (helical) occupy residues 1–21, 25–45, and 67–87; these read MSLV…GLLM, HLMS…ILST, and AACE…TYGV.

This sequence belongs to the complex I subunit 4L family. Core subunit of respiratory chain NADH dehydrogenase (Complex I) which is composed of 45 different subunits.

The protein resides in the mitochondrion inner membrane. It carries out the reaction a ubiquinone + NADH + 5 H(+)(in) = a ubiquinol + NAD(+) + 4 H(+)(out). Functionally, core subunit of the mitochondrial membrane respiratory chain NADH dehydrogenase (Complex I) which catalyzes electron transfer from NADH through the respiratory chain, using ubiquinone as an electron acceptor. Part of the enzyme membrane arm which is embedded in the lipid bilayer and involved in proton translocation. The chain is NADH-ubiquinone oxidoreductase chain 4L (MT-ND4L) from Talpa europaea (European mole).